A 1131-amino-acid chain; its full sequence is MSGSHSNDEDDVVQVPETSSPTKVASSSPLKPTSPTVPDASVASLRSRFTFKPSDPSEGAHTSKPLPSGSPEVALVNLAREFPDFSQTLVQAVFKSNSFNLQSARERLTRLRQQRQNWTWNKNASPKKSETPPPVKKSLPLANTGRLSSIHGNINNKSSKITVAKQKTSIFDRYSNVINQKQYTFELPTNLNIDSEALSKLPVNYNKKRRLVRADQHPIGKSYESSATQLGSAREKLLANRKYGRHANDNDEEEEESMMTDDDDASGDDYTESTPQINLDEQVLQFINDSDIVDLSDLSDTTMHKAQLIASHRPYSSLNAFVNTNFNDKDTEENASNKRKRRAAASANESERLLDKITQSIRGYNAIESVIKKCSSYGDLVTSQMKKWGVQVEGDNSELDLMNLGEDDDDDNDDGNNDNNNSNNNNTAGADATSKEKEDTKAVVEGFDETSAEPTPAPAPAPVERETKRIRNTTKPKVVEDEDDDVDLEAIDDELPQSEHEDDDYEEEDEDYNDEEEDVEYDDGDDDDDDDDEFVATRKNTHVISTTSRNGRKPIVKFFKGKPRLLSPEISLKDYQQTGINWLNLLYQNKMSCILADDMGLGKTCQVISFFAYLKQINEPGPHLVVVPSSTLENWLREFQKFAPALKIEPYYGSLQEREELRDILERNAGKYDVIVTTYNLAAGNKYDVSFLKNRNFNVVVYDEGHMLKNSTSERFAKLMKIRANFRLLLTGTPLQNNLKELMSLLEFIMPNLFISKKESFDAIFKQRAKTTDDNKNHNPLLAQEAITRAKTMMKPFILRRRKDQVLKHLPPKHTHIQYCELNAIQKKIYDKEIQIVLEHKRMIKDGELPKDAKEKSKLQSSSSKNLIMALRKASLHPLLFRNIYNDKIITKMSDAILDEPAYAENGNKEYIKEDMSYMTDFELHKLCCNFPNTLSKYQLHNDEWMQSGKIDALKKLLKTIIVDKQEKVLIFSLFTQVLDILEMVLSTLDYKFLRLDGSTQVNDRQLLIDKFYEDKDIPIFILSTKAGGFGINLVCANNVIIFDQSFNPHDDRQAADRAHRVGQTKEVNITTLITKDSIEEKIHQLAKNKLALDSYISEDKKSQDVLESKVSDMLEDIIYDENSKPKGTKE.

Residues 1 to 70 (MSGSHSNDED…HTSKPLPSGS (70 aa)) form a disordered region. The span at 16-36 (PETSSPTKVASSSPLKPTSPT) shows a compositional bias: polar residues. Residues 76 to 111 (VNLAREFPDFSQTLVQAVFKSNSFNLQSARERLTRL) form a CUE-like region region. Positions 114 to 141 (QRQNWTWNKNASPKKSETPPPVKKSLPL) are disordered. Phosphoserine is present on serine 232. 2 disordered regions span residues 242–273 (KYGRHANDNDEEEEESMMTDDDDASGDDYTES) and 327–350 (NDKDTEENASNKRKRRAAASANES). Residues 250 to 271 (NDEEEEESMMTDDDDASGDDYT) show a composition bias toward acidic residues. The residue at position 369 (serine 369) is a Phosphoserine. Positions 400–533 (DLMNLGEDDD…GDDDDDDDDE (134 aa)) are disordered. Residues 405–416 (GEDDDDDNDDGN) are compositionally biased toward acidic residues. The span at 417–432 (NDNNNSNNNNTAGADA) shows a compositional bias: low complexity. A compositionally biased stretch (basic and acidic residues) spans 433-442 (TSKEKEDTKA). Serine 451 carries the phosphoserine modification. A compositionally biased stretch (acidic residues) spans 480–533 (EDEDDDVDLEAIDDELPQSEHEDDDYEEEDEDYNDEEEDVEYDDGDDDDDDDDE). Positions 584–752 (NLLYQNKMSC…MSLLEFIMPN (169 aa)) constitute a Helicase ATP-binding domain. 597 to 604 (DDMGLGKT) is a binding site for ATP. The DEGH box motif lies at 703-706 (DEGH). The 156-residue stretch at 953-1108 (ALKKLLKTII…EDKKSQDVLE (156 aa)) folds into the Helicase C-terminal domain.

This sequence belongs to the SNF2/RAD54 helicase family. As to quaternary structure, homodimer.

Its subcellular location is the nucleus. The protein localises to the chromosome. The catalysed reaction is ATP + H2O = ADP + phosphate + H(+). Functionally, DNA helicase that possesses intrinsic ATP-dependent nucleosome-remodeling activity and is both required for DNA repair and heterochromatin organization. Promotes DNA end resection of double-strand breaks (DSBs) following DNA damage: probably acts by weakening histone DNA interactions in nucleosomes flanking DSBs, facilitating single-stranded DNA (ssDNA) production by the EXO1 and SGS1 machinery. Promotes gene silencing at heterochromatin by regulating the chromatin structure within or around silent loci. Also required for heterochromatin organization at centromeres. This is ATP-dependent helicase FUN30 (FUN30) from Saccharomyces cerevisiae (strain ATCC 204508 / S288c) (Baker's yeast).